A 343-amino-acid polypeptide reads, in one-letter code: Flap endonuclease 1 (343 aa).

Residues 1–98 (MGVPIGDLVP…KELEKRREAR (98 aa)) form an N-domain region. The Mg(2+) site is built by Asp27, Asp80, Glu152, Glu154, Asp173, Asp175, and Asp236. The I-domain stretch occupies residues 116-258 (EARKYAQRAT…KALEIVRYSR (143 aa)). The tract at residues 330 to 338 (RQSTLESWF) is interaction with PCNA.

The protein belongs to the XPG/RAD2 endonuclease family. FEN1 subfamily. In terms of assembly, interacts with PCNA. PCNA stimulates the nuclease activity without altering cleavage specificity. The cofactor is Mg(2+).

In terms of biological role, structure-specific nuclease with 5'-flap endonuclease and 5'-3' exonuclease activities involved in DNA replication and repair. During DNA replication, cleaves the 5'-overhanging flap structure that is generated by displacement synthesis when DNA polymerase encounters the 5'-end of a downstream Okazaki fragment. Binds the unpaired 3'-DNA end and kinks the DNA to facilitate 5' cleavage specificity. Cleaves one nucleotide into the double-stranded DNA from the junction in flap DNA, leaving a nick for ligation. Also involved in the base excision repair (BER) pathway. Acts as a genome stabilization factor that prevents flaps from equilibrating into structures that lead to duplications and deletions. Also possesses 5'-3' exonuclease activity on nicked or gapped double-stranded DNA. This is Flap endonuclease 1 from Pyrococcus horikoshii (strain ATCC 700860 / DSM 12428 / JCM 9974 / NBRC 100139 / OT-3).